The sequence spans 546 residues: Tryptophan biosynthesis protein TrpCD (546 aa).

The tract at residues 1-226 (MMDFGFVDSL…FVQTVCGGEK (226 aa)) is indole-3-glycerol phosphate synthase. The tract at residues 227 to 546 (MIEDVLRGLD…EEIACKSTSM (320 aa)) is anthranilate phosphoribosyltransferase. 5-phospho-alpha-D-ribose 1-diphosphate is bound by residues glycine 295, 298–299 (GD), serine 303, 305–308 (NVST), 322–330 (KHGNRAVSS), and serine 334. Residue glycine 295 participates in anthranilate binding. Serine 307 lines the Mg(2+) pocket. Residue asparagine 325 participates in anthranilate binding. Arginine 380 is an anthranilate binding site. Aspartate 437 and glutamate 438 together coordinate Mg(2+).

This sequence in the N-terminal section; belongs to the TrpC family. It in the C-terminal section; belongs to the anthranilate phosphoribosyltransferase family. The cofactor is Mg(2+).

It catalyses the reaction 1-(2-carboxyphenylamino)-1-deoxy-D-ribulose 5-phosphate + H(+) = (1S,2R)-1-C-(indol-3-yl)glycerol 3-phosphate + CO2 + H2O. The catalysed reaction is N-(5-phospho-beta-D-ribosyl)anthranilate + diphosphate = 5-phospho-alpha-D-ribose 1-diphosphate + anthranilate. Its pathway is amino-acid biosynthesis; L-tryptophan biosynthesis; L-tryptophan from chorismate: step 2/5. It functions in the pathway amino-acid biosynthesis; L-tryptophan biosynthesis; L-tryptophan from chorismate: step 4/5. In terms of biological role, bifunctional enzyme that catalyzes the second and fourth steps of tryptophan biosynthetic pathway. The second step is catalyzed by the anthranilate phosphoribosyltransferase, coded by the TrpD domain and the fourth step is catalyzed by indole-3-glycerol phosphate synthase, coded by the TrpC domain. The protein is Tryptophan biosynthesis protein TrpCD (trpCD) of Archaeoglobus fulgidus (strain ATCC 49558 / DSM 4304 / JCM 9628 / NBRC 100126 / VC-16).